Reading from the N-terminus, the 431-residue chain is Saglin (431 aa).

The signal sequence occupies residues 1 to 39 (MSVRGYSGVQVISSRKHRSMSRLPTVLLLLASAAVLAAG). A glycan (N-linked (GlcNAc...) asparagine) is linked at N95. Residues 120–169 (LDDAQRQMEQEHRQYAATLEEQLHAAQQETQQEQEMKKALQKQLDALTDS) are a coiled coil.

As to quaternary structure, homodimer; disulfide-linked. (Microbial infection) Interacts with Plasmodium berghei TRAP (via integrin-like A-domain); the interaction probably promotes sporozoite invasion of salivary gland. As to expression, female saliva (at protein level). Female salivary gland (at protein level).

It is found in the secreted. (Microbial infection) Facilitates invasion of mosquito salivary glands by Plasmodium yoelii sporozoites. Functionally, (Microbial infection) Facilitates invasion of mosquito salivary glands by Plasmodium falciparum sporozoites. Its function is as follows. (Microbial infection) Probably facilitates invasion of mosquito salivary glands by Plasmodium berghei sporozoites. This chain is Saglin, found in Anopheles gambiae (African malaria mosquito).